The primary structure comprises 198 residues: Large ribosomal subunit protein bL25 (198 aa).

It belongs to the bacterial ribosomal protein bL25 family. CTC subfamily. As to quaternary structure, part of the 50S ribosomal subunit; part of the 5S rRNA/L5/L18/L25 subcomplex. Contacts the 5S rRNA. Binds to the 5S rRNA independently of L5 and L18.

Its function is as follows. This is one of the proteins that binds to the 5S RNA in the ribosome where it forms part of the central protuberance. In Nitrosomonas europaea (strain ATCC 19718 / CIP 103999 / KCTC 2705 / NBRC 14298), this protein is Large ribosomal subunit protein bL25.